Consider the following 132-residue polypeptide: Transthyretin-like protein 16 (132 aa).

An N-terminal signal peptide occupies residues 1 to 19; it reads MRSLVVCLLLAACALECTA. N23 is a glycosylation site (N-linked (GlcNAc...) asparagine).

Belongs to the nematode transthyretin-like family.

It is found in the secreted. This chain is Transthyretin-like protein 16 (ttr-16), found in Caenorhabditis elegans.